The following is a 489-amino-acid chain: uncharacterized protein (489 aa).

Transmembrane regions (helical) follow at residues 1–21 (MNAA…LGIR), 40–60 (FGTV…FTFL), 74–94 (FYII…LPAV), 117–137 (PLLG…YLVL), 158–178 (AAIW…GIHG), 188–208 (IMIL…YYGG), 234–254 (AWFS…PHTF), 271–291 (IIMP…FAAI), 318–338 (FVGI…SMIL), 362–382 (VSAL…YFTF), 388–408 (IVTL…ALLF), 422–442 (FAGI…ETTI), and 456–476 (LNVG…VSLM).

This sequence belongs to the sodium:solute symporter (SSF) (TC 2.A.21) family.

It is found in the cell membrane. This is an uncharacterized protein from Bacillus subtilis (strain 168).